The chain runs to 259 residues: Mediator of RNA polymerase II transcription subunit 7 (259 aa).

Disordered stretches follow at residues 1 to 52, 99 to 118, and 223 to 242; these read MAEP…EWSP, TQLY…SSQP, and GSTI…EDQI. Residues 31–44 show a composition bias toward basic and acidic residues; it reads ENIKKEASKGEDGR. A compositionally biased stretch (basic and acidic residues) spans 230–242; that stretch reads TKDKKGVKPEDQI.

Belongs to the Mediator complex subunit 7 family. Component of the Mediator complex.

The protein localises to the nucleus. Functionally, component of the Mediator complex, a coactivator involved in the regulated transcription of nearly all RNA polymerase II-dependent genes. Mediator functions as a bridge to convey information from gene-specific regulatory proteins to the basal RNA polymerase II transcription machinery. Mediator is recruited to promoters by direct interactions with regulatory proteins and serves as a scaffold for the assembly of a functional preinitiation complex with RNA polymerase II and the general transcription factors. The sequence is that of Mediator of RNA polymerase II transcription subunit 7 (med7) from Emericella nidulans (strain FGSC A4 / ATCC 38163 / CBS 112.46 / NRRL 194 / M139) (Aspergillus nidulans).